The chain runs to 99 residues: MSGADRPDRIARRIHVKGKVQGVWFRAWTVEQAAELGLDGWVRNRADGSVEAVAAGPADRVEEMIARCRRGSPASRVDSIDVEDTPGVVAQGFTQKPTV.

An Acylphosphatase-like domain is found at 11-97 (ARRIHVKGKV…VVAQGFTQKP (87 aa)). Active-site residues include Arg26 and Asn44.

Belongs to the acylphosphatase family.

It catalyses the reaction an acyl phosphate + H2O = a carboxylate + phosphate + H(+). The sequence is that of Acylphosphatase (acyP) from Rhizorhabdus wittichii (strain DSM 6014 / CCUG 31198 / JCM 15750 / NBRC 105917 / EY 4224 / RW1) (Sphingomonas wittichii).